The following is a 298-amino-acid chain: HTH-type transcriptional regulator ArgP (298 aa).

In terms of domain architecture, HTH lysR-type spans 4–60 (LDYRWIEALDSVVSKGSFERAAEQLFISQSAVSQRIKQLEKYLAQPVLIREQPPRPT). Residues 21–40 (FERAAEQLFISQSAVSQRIK) constitute a DNA-binding region (H-T-H motif).

It belongs to the LysR transcriptional regulatory family. In terms of assembly, homodimer.

Functionally, controls the transcription of genes involved in arginine and lysine metabolism. The chain is HTH-type transcriptional regulator ArgP from Vibrio cholerae serotype O1 (strain ATCC 39315 / El Tor Inaba N16961).